A 420-amino-acid chain; its full sequence is L-cysteine:1D-myo-inositol 2-amino-2-deoxy-alpha-D-glucopyranoside ligase (420 aa).

Residue Cys43 coordinates Zn(2+). L-cysteinyl-5'-AMP is bound by residues 43 to 46, Thr58, and 81 to 83; these read CGIT and NIT. A 'HIGH' region motif is present at residues 45–55; sequence ITPYDATHLGH. The 'ERGGDP' region motif lies at 187–192; sequence ERGGDP. Trp227 serves as a coordination point for L-cysteinyl-5'-AMP. Cys231 contributes to the Zn(2+) binding site. 249-251 lines the L-cysteinyl-5'-AMP pocket; it reads GSD. His256 provides a ligand contact to Zn(2+). Ile289 is a binding site for L-cysteinyl-5'-AMP. The short motif at 295–299 is the 'KMSKS' region element; sequence KMSKS.

It belongs to the class-I aminoacyl-tRNA synthetase family. MshC subfamily. In terms of assembly, monomer. Requires Zn(2+) as cofactor.

It catalyses the reaction 1D-myo-inositol 2-amino-2-deoxy-alpha-D-glucopyranoside + L-cysteine + ATP = 1D-myo-inositol 2-(L-cysteinylamino)-2-deoxy-alpha-D-glucopyranoside + AMP + diphosphate + H(+). Catalyzes the ATP-dependent condensation of GlcN-Ins and L-cysteine to form L-Cys-GlcN-Ins. In Segniliparus rotundus (strain ATCC BAA-972 / CDC 1076 / CIP 108378 / DSM 44985 / JCM 13578), this protein is L-cysteine:1D-myo-inositol 2-amino-2-deoxy-alpha-D-glucopyranoside ligase.